The chain runs to 179 residues: ATP-dependent protease subunit HslV (179 aa).

T6 is a catalytic residue. Positions 164, 167, and 170 each coordinate Na(+).

The protein belongs to the peptidase T1B family. HslV subfamily. In terms of assembly, a double ring-shaped homohexamer of HslV is capped on each side by a ring-shaped HslU homohexamer. The assembly of the HslU/HslV complex is dependent on binding of ATP.

Its subcellular location is the cytoplasm. It catalyses the reaction ATP-dependent cleavage of peptide bonds with broad specificity.. Its activity is regulated as follows. Allosterically activated by HslU binding. In terms of biological role, protease subunit of a proteasome-like degradation complex believed to be a general protein degrading machinery. The sequence is that of ATP-dependent protease subunit HslV from Listeria innocua serovar 6a (strain ATCC BAA-680 / CLIP 11262).